A 345-amino-acid chain; its full sequence is Nuclear egress protein 1 (345 aa).

A CCCH-type zinc finger spans residues 115–247 (CISLSEMGYT…FVFKPGSPLH (133 aa)).

Belongs to the herpesviridae NEC1 protein family. In terms of assembly, forms a heterohexameric complex with NEC2. Interacts with capsid vertex specific component 2/CVC2; this interaction directs the capsid to the host inner nuclear membrane to initiate budding. In terms of processing, phosphorylated at serine residues in the N-terminus. This phosphorylation regulates the localization within the inner nuclear membrane.

The protein localises to the host nucleus inner membrane. Its function is as follows. Plays an essential role in virion nuclear egress, the first step of virion release from infected cell. Within the host nucleus, NEC1 interacts with the newly formed capsid through the vertexes and directs it to the inner nuclear membrane by associating with NEC2. Induces the budding of the capsid at the inner nuclear membrane as well as its envelopment into the perinuclear space. There, the NEC1/NEC2 complex promotes the fusion of the enveloped capsid with the outer nuclear membrane and the subsequent release of the viral capsid into the cytoplasm where it will reach the secondary budding sites in the host Golgi or trans-Golgi network. The protein is Nuclear egress protein 1 of Psittacid herpesvirus 1 (isolate Amazon parrot/-/97-0001/1997) (PsHV-1).